A 362-amino-acid polypeptide reads, in one-letter code: MSNSDDEIQEIEAKRQKMSQEDSEVEIEILDEPEQGKLKNSSMSDEQKLHEFAIITATDEAFAQSILQDVDWDLKKALDVFYGSEAFAEARSAAVMGASSSMASSGAAVMTAEDLKGFEVSVMSWNIDGLDGRSLLTRMKAVAHIVKNVNPDILFLQEVVDRDLAPIDKLQSLYKIYYSNKGCQYYTAILVSKMFDVEKHDVIHFQNSGMYRTLQILEGSIGGLKVFLLNTHLESTREHRPQRCAQFGFCMDKVREIIAQNPGALVFFGGDLNLRDEEVSRVPDGVKDAWEAAGSDNKTKFTWDTFKNDNKQGFHGAKMRFDRLYWSGPLDKVKFTLEGRQRIRSCLCFPSDHWAINATFFA.

A compositionally biased stretch (acidic residues) spans 1 to 10 (MSNSDDEIQE). Residues 1 to 43 (MSNSDDEIQEIEAKRQKMSQEDSEVEIEILDEPEQGKLKNSSM) form a disordered region. Basic and acidic residues predominate over residues 11-20 (IEAKRQKMSQ). Residues 21 to 33 (EDSEVEIEILDEP) are compositionally biased toward acidic residues. Residues 126 to 130 (NIDGL) are interaction with 5' end of substrate DNA. Residues Asp-128 and Glu-158 each coordinate Mg(2+). An interaction with 5' end of substrate DNA region spans residues 232-237 (HLESTR). Asp-271 serves as the catalytic Proton donor/acceptor. The interaction with 5' end of substrate DNA stretch occupies residues 273–275 (NLR).

It belongs to the CCR4/nocturin family. TTRAP/TDP2 subfamily. Interacts with mxl-1; the interaction promotes axon regeneration after injury. Interacts with ets-4; the interaction is required for the sumoylation of ets-4. Mg(2+) is required as a cofactor. It depends on Mn(2+) as a cofactor.

The protein localises to the nucleus. It is found in the PML body. Its function is as follows. DNA repair enzyme that can remove a variety of covalent adducts from DNA through hydrolysis of a 5'-phosphodiester bond, giving rise to DNA with a free 5' phosphate. Catalyzes the hydrolysis of dead-end complexes between DNA and the topoisomerase 2 (top2) active site tyrosine residue. Hydrolyzes 5'-phosphoglycolates on protruding 5' ends on DNA double-strand breaks (DSBs) due to DNA damage by radiation and free radicals. Inhibits axon regeneration after neuronal injury by promoting the sumoylation of ets-4, thereby inhibiting the phosphorylation of ets-4 required for probable interaction with cebp-1 and activation of svh-2 expression. The chain is 5'-tyrosyl-DNA phosphodiesterase from Caenorhabditis elegans.